A 37-amino-acid chain; its full sequence is Large ribosomal subunit protein bL36c (37 aa).

This sequence belongs to the bacterial ribosomal protein bL36 family.

It is found in the plastid. The protein localises to the chloroplast. This chain is Large ribosomal subunit protein bL36c, found in Oenothera argillicola (Appalachian evening primrose).